Here is a 71-residue protein sequence, read N- to C-terminus: Ribosome modulation factor (71 aa).

This sequence belongs to the ribosome modulation factor family.

Its subcellular location is the cytoplasm. Functionally, during stationary phase, converts 70S ribosomes to an inactive dimeric form (100S ribosomes). The protein is Ribosome modulation factor of Pseudomonas savastanoi pv. phaseolicola (strain 1448A / Race 6) (Pseudomonas syringae pv. phaseolicola (strain 1448A / Race 6)).